The chain runs to 540 residues: Chaperonin GroEL (540 aa).

ATP contacts are provided by residues 30-33 (TLGP), Lys51, 87-91 (DGTTT), Gly415, and Asp495.

The protein belongs to the chaperonin (HSP60) family. As to quaternary structure, forms a cylinder of 14 subunits composed of two heptameric rings stacked back-to-back. Interacts with the co-chaperonin GroES.

The protein localises to the cytoplasm. The enzyme catalyses ATP + H2O + a folded polypeptide = ADP + phosphate + an unfolded polypeptide.. Functionally, together with its co-chaperonin GroES, plays an essential role in assisting protein folding. The GroEL-GroES system forms a nano-cage that allows encapsulation of the non-native substrate proteins and provides a physical environment optimized to promote and accelerate protein folding. The sequence is that of Chaperonin GroEL from Serratia ficaria.